A 347-amino-acid chain; its full sequence is Phenylalanine--tRNA ligase alpha subunit (347 aa).

E261 lines the Mg(2+) pocket.

This sequence belongs to the class-II aminoacyl-tRNA synthetase family. Phe-tRNA synthetase alpha subunit type 1 subfamily. Tetramer of two alpha and two beta subunits. It depends on Mg(2+) as a cofactor.

It localises to the cytoplasm. It catalyses the reaction tRNA(Phe) + L-phenylalanine + ATP = L-phenylalanyl-tRNA(Phe) + AMP + diphosphate + H(+). The chain is Phenylalanine--tRNA ligase alpha subunit from Streptococcus equi subsp. equi (strain 4047).